The primary structure comprises 485 residues: Calcium-dependent protein kinase 27 (485 aa).

G2 carries N-myristoyl glycine lipidation. Residues 28–290 (YILGEELGRG…AAEVLGHPWM (263 aa)) form the Protein kinase domain. ATP is bound by residues 34-42 (LGRGNFGLT) and K57. D156 functions as the Proton acceptor in the catalytic mechanism. S196 is subject to Phosphoserine. The segment at 295–325 (ASDKPIDGVVLSRLKRFRDANKFKKVVLKFI) is autoinhibitory domain. EF-hand domains lie at 332-367 (EEIK…LGSN), 368-403 (LSKT…RYKL), 404-439 (DRDE…DGAG), and 444-474 (IKQI…ESSL). 20 residues coordinate Ca(2+): D345, D347, S349, N351, E356, D381, D383, N385, T387, E392, D417, D419, D421, H423, E428, D452, D454, D456, K458, and E463.

Belongs to the protein kinase superfamily. Ser/Thr protein kinase family. CDPK subfamily.

Its subcellular location is the membrane. It carries out the reaction L-seryl-[protein] + ATP = O-phospho-L-seryl-[protein] + ADP + H(+). It catalyses the reaction L-threonyl-[protein] + ATP = O-phospho-L-threonyl-[protein] + ADP + H(+). Its activity is regulated as follows. Activated by calcium. Autophosphorylation may play an important role in the regulation of the kinase activity. Functionally, may play a role in signal transduction pathways that involve calcium as a second messenger. The chain is Calcium-dependent protein kinase 27 (CPK27) from Arabidopsis thaliana (Mouse-ear cress).